Consider the following 330-residue polypeptide: Diacylglycerol acyltransferase/mycolyltransferase Ag85B (330 aa).

The N-terminal stretch at 1–40 is a signal peptide; the sequence is MTDLSEKVRAWGRRLLVGAAAAVTLPGLIGLAGGAATANA. Residue 82–83 participates in substrate binding; sequence LR. Positions 98–108 are fibronectin-binding; sequence FEWYYQSGLSV. Cys-127 and Cys-132 form a disulfide bridge. Residues Ser-166 and Asp-194 each contribute to the substrate site. Ser-166 functions as the Nucleophile in the catalytic mechanism. Glu-270 is an active-site residue. Substrate is bound by residues 272-275, Lys-279, and 302-304; these read FVRS and HSW. The active site involves His-302.

Belongs to the mycobacterial A85 antigen family.

Its subcellular location is the secreted. It carries out the reaction 2 alpha,alpha'-trehalose 6-mycolate = alpha,alpha'-trehalose 6,6'-bismycolate + alpha,alpha-trehalose. It catalyses the reaction an acyl-CoA + a 1,2-diacyl-sn-glycerol = a triacyl-sn-glycerol + CoA. Functionally, the antigen 85 proteins (FbpA, FbpB, FbpC) are responsible for the high affinity of mycobacteria for fibronectin, a large adhesive glycoprotein, which facilitates the attachment of M.tuberculosis to murine alveolar macrophages (AMs). They also help to maintain the integrity of the cell wall by catalyzing the transfer of mycolic acids to cell wall arabinogalactan and through the synthesis of alpha,alpha-trehalose dimycolate (TDM, cord factor). They catalyze the transfer of a mycoloyl residue from one molecule of alpha,alpha-trehalose monomycolate (TMM) to another TMM, leading to the formation of TDM. The protein is Diacylglycerol acyltransferase/mycolyltransferase Ag85B (fbpB) of Mycobacterium avium.